We begin with the raw amino-acid sequence, 318 residues long: Methionyl-tRNA formyltransferase (318 aa).

110–113 (SLLP) contributes to the (6S)-5,6,7,8-tetrahydrofolate binding site.

The protein belongs to the Fmt family.

It catalyses the reaction L-methionyl-tRNA(fMet) + (6R)-10-formyltetrahydrofolate = N-formyl-L-methionyl-tRNA(fMet) + (6S)-5,6,7,8-tetrahydrofolate + H(+). Attaches a formyl group to the free amino group of methionyl-tRNA(fMet). The formyl group appears to play a dual role in the initiator identity of N-formylmethionyl-tRNA by promoting its recognition by IF2 and preventing the misappropriation of this tRNA by the elongation apparatus. This Geobacillus sp. (strain WCH70) protein is Methionyl-tRNA formyltransferase.